We begin with the raw amino-acid sequence, 37 residues long: uncharacterized protein (37 aa).

The chain crosses the membrane as a helical span at residues 13–33 (TFLTIIVLLMIVFGIAIVALL).

The protein localises to the host membrane. This is an uncharacterized protein from Acidianus convivator (ABV).